An 87-amino-acid polypeptide reads, in one-letter code: Large ribosomal subunit protein bL31B (87 aa).

This sequence belongs to the bacterial ribosomal protein bL31 family. Type B subfamily. Part of the 50S ribosomal subunit.

In Burkholderia multivorans (strain ATCC 17616 / 249), this protein is Large ribosomal subunit protein bL31B.